The primary structure comprises 408 residues: Guanine nucleotide-binding protein alpha-14 subunit (408 aa).

GTP contacts are provided by residues 38–45 (HSEELEAK), 78–85 (GGPSSGKS), 201–205 (NRISK), 216–222 (VHSRKAT), 241–245 (DVGGQ), 285–288 (FPNF), 325–328 (NKVD), and Ala380. A G-alpha domain is found at 70 to 408 (SHIKILILGG…KANSKATGLS (339 aa)). The tract at residues 73 to 86 (KILILGGPSSGKST) is G1 motif. Ser85 contacts Mg(2+). The G2 motif stretch occupies residues 214–222 (DIVHSRKAT). Thr222 contributes to the Mg(2+) binding site. The tract at residues 237–246 (LLMVDVGGQR) is G3 motif. Positions 321-328 (LLFFNKVD) are G4 motif. The interval 378–383 (TTATNT) is G5 motif.

The protein belongs to the G-alpha family. In terms of assembly, g proteins are composed of 3 units; alpha, beta and gamma. The alpha chain contains the guanine nucleotide binding site.

In terms of biological role, guanine nucleotide-binding proteins (G proteins) are involved as modulators or transducers in various transmembrane signaling systems. The protein is Guanine nucleotide-binding protein alpha-14 subunit (gpa-14) of Caenorhabditis briggsae.